Here is a 186-residue protein sequence, read N- to C-terminus: Elongation factor P (186 aa).

It belongs to the elongation factor P family.

Its subcellular location is the cytoplasm. It functions in the pathway protein biosynthesis; polypeptide chain elongation. Involved in peptide bond synthesis. Stimulates efficient translation and peptide-bond synthesis on native or reconstituted 70S ribosomes in vitro. Probably functions indirectly by altering the affinity of the ribosome for aminoacyl-tRNA, thus increasing their reactivity as acceptors for peptidyl transferase. The chain is Elongation factor P from Brucella canis (strain ATCC 23365 / NCTC 10854 / RM-666).